Reading from the N-terminus, the 189-residue chain is Peptidyl-tRNA hydrolase (189 aa).

TRNA is bound at residue Y15. The active-site Proton acceptor is the H20. F66, N68, and N114 together coordinate tRNA.

The protein belongs to the PTH family. In terms of assembly, monomer.

It localises to the cytoplasm. The catalysed reaction is an N-acyl-L-alpha-aminoacyl-tRNA + H2O = an N-acyl-L-amino acid + a tRNA + H(+). Functionally, hydrolyzes ribosome-free peptidyl-tRNAs (with 1 or more amino acids incorporated), which drop off the ribosome during protein synthesis, or as a result of ribosome stalling. Its function is as follows. Catalyzes the release of premature peptidyl moieties from peptidyl-tRNA molecules trapped in stalled 50S ribosomal subunits, and thus maintains levels of free tRNAs and 50S ribosomes. The protein is Peptidyl-tRNA hydrolase of Streptococcus gordonii (strain Challis / ATCC 35105 / BCRC 15272 / CH1 / DL1 / V288).